We begin with the raw amino-acid sequence, 91 residues long: MTTQRRKVELDPDTVERDLARLVLTVVELLRQLMERQALRRVEGGDLTEEQEERIGLTLMLLEDRMELLRTRFGLEPEDLNLDLGPLGPLL.

This sequence belongs to the gas vesicle GvpK family.

It localises to the gas vesicle. Its function is as follows. Might be involved in nucleating gas vesicle formation. Gas vesicles are hollow, gas filled proteinaceous nanostructures found in some microorganisms. It is not clear what function gas vesicles perform in soil bacteria. The polypeptide is Gas vesicle protein K (Streptomyces sp. (strain CB03234)).